The chain runs to 562 residues: Glutamine--tRNA ligase (562 aa).

Positions 35–45 (PEPNGYLHIGH) match the 'HIGH' region motif. ATP-binding positions include 36-38 (EPN) and 42-48 (HIGHAKS). Residues aspartate 68 and tyrosine 213 each coordinate L-glutamine. Residues threonine 232, 262-263 (RL), and 270-272 (LSK) contribute to the ATP site. Positions 269-273 (ILSKR) match the 'KMSKS' region motif.

Belongs to the class-I aminoacyl-tRNA synthetase family. Monomer.

It localises to the cytoplasm. It catalyses the reaction tRNA(Gln) + L-glutamine + ATP = L-glutaminyl-tRNA(Gln) + AMP + diphosphate. The sequence is that of Glutamine--tRNA ligase from Buchnera aphidicola subsp. Schizaphis graminum (strain Sg).